A 120-amino-acid chain; its full sequence is Glycine cleavage system H protein (120 aa).

One can recognise a Lipoyl-binding domain in the interval 17-99 (VATVGITEHA…QGAAWFFKLK (83 aa)). At Lys58 the chain carries N6-lipoyllysine.

Belongs to the GcvH family. As to quaternary structure, the glycine cleavage system is composed of four proteins: P, T, L and H. It depends on (R)-lipoate as a cofactor.

The glycine cleavage system catalyzes the degradation of glycine. The H protein shuttles the methylamine group of glycine from the P protein to the T protein. This chain is Glycine cleavage system H protein, found in Sinorhizobium fredii (strain NBRC 101917 / NGR234).